The chain runs to 260 residues: Indole-3-glycerol phosphate synthase (260 aa).

Belongs to the TrpC family.

It carries out the reaction 1-(2-carboxyphenylamino)-1-deoxy-D-ribulose 5-phosphate + H(+) = (1S,2R)-1-C-(indol-3-yl)glycerol 3-phosphate + CO2 + H2O. It participates in amino-acid biosynthesis; L-tryptophan biosynthesis; L-tryptophan from chorismate: step 4/5. This Leifsonia xyli subsp. xyli (strain CTCB07) protein is Indole-3-glycerol phosphate synthase.